The chain runs to 449 residues: Exodeoxyribonuclease 7 large subunit (449 aa).

Belongs to the XseA family. In terms of assembly, heterooligomer composed of large and small subunits.

The protein resides in the cytoplasm. The catalysed reaction is Exonucleolytic cleavage in either 5'- to 3'- or 3'- to 5'-direction to yield nucleoside 5'-phosphates.. In terms of biological role, bidirectionally degrades single-stranded DNA into large acid-insoluble oligonucleotides, which are then degraded further into small acid-soluble oligonucleotides. This chain is Exodeoxyribonuclease 7 large subunit, found in Salmonella typhimurium (strain LT2 / SGSC1412 / ATCC 700720).